We begin with the raw amino-acid sequence, 161 residues long: Regulator of ribonuclease activity A (161 aa).

The protein belongs to the RraA family. Homotrimer. Binds to both RNA-binding sites in the C-terminal region of Rne and to RhlB.

Its subcellular location is the cytoplasm. Functionally, globally modulates RNA abundance by binding to RNase E (Rne) and regulating its endonucleolytic activity. Can modulate Rne action in a substrate-dependent manner by altering the composition of the degradosome. Modulates RNA-binding and helicase activities of the degradosome. The polypeptide is Regulator of ribonuclease activity A (Enterobacter sp. (strain 638)).